We begin with the raw amino-acid sequence, 324 residues long: Phospho-N-acetylmuramoyl-pentapeptide-transferase (324 aa).

10 helical membrane passes run 9-29 (TFAV…PFLV), 54-74 (MGAV…SFIG), 77-97 (VSAA…LGFL), 117-137 (FLGQ…SDFA), 147-167 (IEVD…VGFS), 176-196 (LDGL…VIAF), 201-221 (MDVA…LLFN), 227-247 (IFMG…VSIL), 253-273 (LLLL…LQVF), and 304-324 (VLTF…VVIF).

It belongs to the glycosyltransferase 4 family. MraY subfamily. The cofactor is Mg(2+).

The protein localises to the cell membrane. It catalyses the reaction UDP-N-acetyl-alpha-D-muramoyl-L-alanyl-gamma-D-glutamyl-meso-2,6-diaminopimeloyl-D-alanyl-D-alanine + di-trans,octa-cis-undecaprenyl phosphate = di-trans,octa-cis-undecaprenyl diphospho-N-acetyl-alpha-D-muramoyl-L-alanyl-D-glutamyl-meso-2,6-diaminopimeloyl-D-alanyl-D-alanine + UMP. Its pathway is cell wall biogenesis; peptidoglycan biosynthesis. Catalyzes the initial step of the lipid cycle reactions in the biosynthesis of the cell wall peptidoglycan: transfers peptidoglycan precursor phospho-MurNAc-pentapeptide from UDP-MurNAc-pentapeptide onto the lipid carrier undecaprenyl phosphate, yielding undecaprenyl-pyrophosphoryl-MurNAc-pentapeptide, known as lipid I. This is Phospho-N-acetylmuramoyl-pentapeptide-transferase from Listeria welshimeri serovar 6b (strain ATCC 35897 / DSM 20650 / CCUG 15529 / CIP 8149 / NCTC 11857 / SLCC 5334 / V8).